Consider the following 720-residue polypeptide: Protein-glutamine gamma-glutamyltransferase 5 (720 aa).

A2 is modified (N-acetylalanine). Residues C278, H337, and D360 contribute to the active site. Positions 400, 402, 448, and 453 each coordinate Ca(2+). Residues 470 to 499 (HGSQRGAELQPSRPTSLSQDSPRSLHTPSL) are disordered. Residues 481–496 (SRPTSLSQDSPRSLHT) are compositionally biased toward polar residues.

It belongs to the transglutaminase superfamily. Transglutaminase family. Requires Ca(2+) as cofactor. As to expression, expressed in foreskin keratinocytes.

The protein localises to the cytoplasm. The catalysed reaction is L-glutaminyl-[protein] + L-lysyl-[protein] = [protein]-L-lysyl-N(6)-5-L-glutamyl-[protein] + NH4(+). In terms of biological role, catalyzes the cross-linking of proteins and the conjugation of polyamines to proteins. Contributes to the formation of the cornified cell envelope of keratinocytes. The protein is Protein-glutamine gamma-glutamyltransferase 5 (TGM5) of Homo sapiens (Human).